The chain runs to 366 residues: uncharacterized protein (366 aa).

The region spanning 169-280 (ILDTSVIIDG…LNKVCELQKV (112 aa)) is the PINc domain. Residue Asp250 coordinates Mg(2+). The TRAM domain maps to 295-356 (VVLPGEEMNV…LQTAAGRMIF (62 aa)).

The protein belongs to the ycf81 family. It in the central section; belongs to the PINc/VapC protein family. Mg(2+) serves as cofactor.

Functionally, an RNase. This is an uncharacterized protein from Bacillus subtilis (strain 168).